A 260-amino-acid polypeptide reads, in one-letter code: DNA repair protein RecO (260 aa).

The protein belongs to the RecO family.

Functionally, involved in DNA repair and RecF pathway recombination. This is DNA repair protein RecO from Ligilactobacillus salivarius (strain UCC118) (Lactobacillus salivarius).